Consider the following 377-residue polypeptide: Caspase-4 (377 aa).

The required for LPS-binding stretch occupies residues 1-59; the sequence is MAEDKHNKNPLKMLESLGKELISGLLDDFVEKNVLKLEEEEKKKIYDAKLQDKARVLVD. Positions 1–80 are excised as a propeptide; that stretch reads MAEDKHNKNP…VFVQTFLNID (80 aa). One can recognise a CARD domain in the interval 1–91; the sequence is MAEDKHNKNP…NSTSIKAPEE (91 aa). Serine 83 carries the phosphoserine modification. Residues histidine 210 and cysteine 258 contribute to the active site. A propeptide spanning residues 271–289 is cleaved from the precursor; it reads SPPALADSFSQSSENLEED.

It belongs to the peptidase C14A family. As to quaternary structure, heterotetramer that consists of two anti-parallel arranged heterodimers, each one formed by a 20 kDa (Caspase-4 subunit p20) and a 10 kDa (Caspase-4 subunit p10) subunit. Upon direct LPS-binding, forms large homooligomers, resulting in its activation. These oligomers are often referred to as 'non-canonical inflammasomes'. In its precursor form, interacts with TMEM214; this interaction is required for association with the endoplasmic reticulum membrane. Interacts with CASP1. Interacts with NOD2. Interacts with Serpinb1a, Serpinb1b and Serpinb1c; these interactions regulate CASP4 activity. In terms of assembly, heterotetramer that consists of two anti-parallel arranged heterodimers, each one formed by a 20 kDa (Caspase-4 subunit p20) and a 10 kDa (Caspase-4 subunit p10) subunit. In response to activation signals, undergoes autoproteolytic cleavage and activation.

It localises to the cytoplasm. Its subcellular location is the cytosol. The protein localises to the endoplasmic reticulum membrane. The protein resides in the mitochondrion. It is found in the inflammasome. It localises to the secreted. It catalyses the reaction Strict requirement for Asp at the P1 position. It has a preferred cleavage sequence of Tyr-Val-Ala-Asp-|- but also cleaves at Asp-Glu-Val-Asp-|-.. Activated by homooligomerization induced by direct binding to cytosolic LPS, in a TLR4-independent manner. In addition to LPS, CASP4/CASP11 may also be activated by oxidized phospholipid 1-palmitoyl-2-arachidonoyl- sn-glycero-3-phosphorylcholine, an oxidized phospholipid (oxPAPC), in dendritic cells, promoting adaptive immunity. The role of oxPAPC is however unclear and another report suggests that oxPAPC competes with LPS-binding and inhibits the non-canonical inflammasome in macrophages. In terms of biological role, inflammatory caspase that acts as the effector of the non-canonical inflammasome by mediating lipopolysaccharide (LPS)-induced pyroptosis. Also indirectly activates the NLRP3 and NLRP6 inflammasomes. Acts as a thiol protease that cleaves a tetrapeptide after an Asp residue at position P1: catalyzes cleavage of CGAS, GSDMD and IL18. Effector of the non-canonical inflammasome independently of NLRP3 inflammasome and CASP1: the non-canonical inflammasome promotes pyroptosis through GSDMD cleavage without involving secretion of cytokine IL1B. In the non-canonical inflammasome, CASP4 is activated by direct binding to the lipid A moiety of LPS without the need of an upstream sensor. LPS-binding promotes CASP4 activation and CASP4-mediated cleavage of GSDMD and IL18, followed by IL18 secretion through the GSDMD pore, pyroptosis of infected cells and their extrusion into the gut lumen. Also indirectly promotes secretion of mature cytokines (IL1A and HMGB1) downstream of GSDMD-mediated pyroptosis via activation of the NLRP3 and NLRP6 inflammasomes. Involved in NLRP3-dependent CASP1 activation and IL1B secretion in response to non-canonical activators, such as UVB radiation or cholera enterotoxin. Involved in NLRP6 inflammasome-dependent activation in response to lipoteichoic acid (LTA), a cell-wall component of Gram-positive bacteria, which leads to CASP1 activation and IL1B secretion. Involved in LPS-induced IL6 secretion; this activity may not require caspase enzymatic activity. The non-canonical inflammasome is required for innate immunity to cytosolic, but not vacuolar, bacteria. Plays a crucial role in the restriction of S.typhimurium replication in colonic epithelial cells during infection. Pyroptosis limits bacterial replication, while cytokine secretion promotes the recruitment and activation of immune cells and triggers mucosal inflammation. May also act as an activator of adaptive immunity in dendritic cells, following activation by oxidized phospholipid 1-palmitoyl-2-arachidonoyl- sn-glycero-3-phosphorylcholine, an oxidized phospholipid (oxPAPC). Cleavage of GSDMD is not strictly dependent on the consensus cleavage site but depends on an exosite interface on CASP4 that recognizes and binds the Gasdermin-D, C-terminal (GSDMD-CT) part. Catalyzes cleavage and maturation of IL18; IL18 processing also depends of the exosite interface on CASP4. In contrast, it does not directly process IL1B. During non-canonical inflammasome activation, cuts CGAS and may play a role in the regulation of antiviral innate immune activation. This is Caspase-4 (CASP4) from Bos taurus (Bovine).